The chain runs to 262 residues: Taurine import ATP-binding protein TauB (262 aa).

The region spanning 4-233 (LELERISAQY…RYAAGESARA (230 aa)) is the ABC transporter domain. 38–45 (GPSGSGKT) contacts ATP.

It belongs to the ABC transporter superfamily. Taurine importer (TC 3.A.1.17.1) family. As to quaternary structure, the complex is composed of two ATP-binding proteins (TauB), two transmembrane proteins (TauC) and a solute-binding protein (TauA).

The protein resides in the cell inner membrane. The catalysed reaction is taurine(out) + ATP + H2O = taurine(in) + ADP + phosphate + H(+). In terms of biological role, part of the ABC transporter complex TauABC involved in taurine import. Responsible for energy coupling to the transport system. The polypeptide is Taurine import ATP-binding protein TauB (Pseudomonas putida (Arthrobacter siderocapsulatus)).